The primary structure comprises 452 residues: Gastrin/cholecystokinin type B receptor (452 aa).

Residues 1 to 55 (MELVKLNRSVQGSGPVASLCRPGGPLLNNSGTGNLSCEPPRIRGAGTRELELAIR) are Extracellular-facing. Asparagine 7, asparagine 28, and asparagine 34 each carry an N-linked (GlcNAc...) asparagine glycan. A helical membrane pass occupies residues 56–77 (VTLYAVIFLMSVGGNILIIVVL). At 78–85 (GLSRRLRT) the chain is on the cytoplasmic side. The helical transmembrane segment at 86-107 (VTNAFLLSLAVSDLLLAVACMP) threads the bilayer. The Extracellular segment spans residues 108–129 (FTLLPNLMGTFIFGTVICKAVS). A disulfide bridge links cysteine 125 with cysteine 203. Residues 130-148 (YLMGVSVSVSTLSLVAIAL) traverse the membrane as a helical segment. Topologically, residues 149–168 (ERYSAICRPLQARVWQTRSH) are cytoplasmic. The chain crosses the membrane as a helical span at residues 169 to 187 (AARVILATWLLSGLLMVPY). Over 188 to 217 (PVYTAVQPVGPRVLQCVHRWPSARVRQTWS) the chain is Extracellular. The helical transmembrane segment at 218–240 (VLLLLLLFFVPGVVMAVAYGLIS) threads the bilayer. Residues 241-338 (RELYLGLRFD…KLLAKKRVVR (98 aa)) lie on the Cytoplasmic side of the membrane. The disordered stretch occupies residues 255 to 285 (SESQSRVRGQGGLPGGAAPGPVHQNGRCRPE). Residues 263 to 272 (GQGGLPGGAA) are compositionally biased toward gly residues. Residues 339 to 360 (MLLVIVVLFFMCWLPVYSANTW) form a helical membrane-spanning segment. Residues 361–378 (RAFDGPGAHRALSGAPIS) are Extracellular-facing. A helical transmembrane segment spans residues 379 to 399 (FIHLLSYASACVNPLVYCFMH). Over 400 to 452 (RRFRQACLDTCARCCPRPPRARPRPLPDEDPPTPSIASLSRLSYTTISTLGPG) the chain is Cytoplasmic. Cysteine 413 carries S-palmitoyl cysteine lipidation.

It belongs to the G-protein coupled receptor 1 family.

It localises to the cell membrane. Receptor for gastrin and cholecystokinin. The CCK-B receptors occur throughout the central nervous system where they modulate anxiety, analgesia, arousal, and neuroleptic activity. This receptor mediates its action by association with G proteins that activate a phosphatidylinositol-calcium second messenger system. The chain is Gastrin/cholecystokinin type B receptor (CCKBR) from Oryctolagus cuniculus (Rabbit).